A 406-amino-acid polypeptide reads, in one-letter code: Argininosuccinate synthase (406 aa).

ATP-binding positions include Ala10–Ser18 and Ala37. L-citrulline-binding residues include Tyr88 and Ser93. Gly118 is a binding site for ATP. The L-aspartate site is built by Thr120, Asn124, and Asp125. Asn124 is an L-citrulline binding site. L-citrulline is bound by residues Arg128, Ser179, Ser188, Glu264, and Tyr276.

It belongs to the argininosuccinate synthase family. Type 1 subfamily. In terms of assembly, homotetramer.

The protein resides in the cytoplasm. The enzyme catalyses L-citrulline + L-aspartate + ATP = 2-(N(omega)-L-arginino)succinate + AMP + diphosphate + H(+). It functions in the pathway amino-acid biosynthesis; L-arginine biosynthesis; L-arginine from L-ornithine and carbamoyl phosphate: step 2/3. The chain is Argininosuccinate synthase from Roseobacter denitrificans (strain ATCC 33942 / OCh 114) (Erythrobacter sp. (strain OCh 114)).